The chain runs to 758 residues: 5-methyltetrahydropteroyltriglutamate--homocysteine methyltransferase (758 aa).

5-methyltetrahydropteroyltri-L-glutamate-binding positions include 16 to 19 (RELK) and K112. Residues 433-435 (IGS) and E486 contribute to the L-homocysteine site. L-methionine-binding positions include 433–435 (IGS) and E486. Residues 517–518 (RC) and W563 each bind 5-methyltetrahydropteroyltri-L-glutamate. D601 contacts L-homocysteine. D601 serves as a coordination point for L-methionine. E607 is a binding site for 5-methyltetrahydropteroyltri-L-glutamate. Residues H643, C645, and E667 each coordinate Zn(2+). The active-site Proton donor is H696. Residue C728 participates in Zn(2+) binding.

This sequence belongs to the vitamin-B12 independent methionine synthase family. The cofactor is Zn(2+).

The enzyme catalyses 5-methyltetrahydropteroyltri-L-glutamate + L-homocysteine = tetrahydropteroyltri-L-glutamate + L-methionine. It functions in the pathway amino-acid biosynthesis; L-methionine biosynthesis via de novo pathway; L-methionine from L-homocysteine (MetE route): step 1/1. Functionally, catalyzes the transfer of a methyl group from 5-methyltetrahydrofolate to homocysteine resulting in methionine formation. The chain is 5-methyltetrahydropteroyltriglutamate--homocysteine methyltransferase from Neisseria meningitidis serogroup C (strain 053442).